The following is a 354-amino-acid chain: Uroporphyrinogen decarboxylase (354 aa).

Substrate is bound by residues 27-31, Asp-77, Tyr-154, Thr-209, and His-327; that span reads RQAGR.

It belongs to the uroporphyrinogen decarboxylase family. In terms of assembly, homodimer.

The protein localises to the cytoplasm. It carries out the reaction uroporphyrinogen III + 4 H(+) = coproporphyrinogen III + 4 CO2. It participates in porphyrin-containing compound metabolism; protoporphyrin-IX biosynthesis; coproporphyrinogen-III from 5-aminolevulinate: step 4/4. In terms of biological role, catalyzes the decarboxylation of four acetate groups of uroporphyrinogen-III to yield coproporphyrinogen-III. The protein is Uroporphyrinogen decarboxylase of Actinobacillus succinogenes (strain ATCC 55618 / DSM 22257 / CCUG 43843 / 130Z).